Reading from the N-terminus, the 422-residue chain is Enolase (422 aa).

(2R)-2-phosphoglycerate is bound at residue glutamine 162. Glutamate 204 functions as the Proton donor in the catalytic mechanism. Residues aspartate 241, glutamate 284, and aspartate 311 each contribute to the Mg(2+) site. (2R)-2-phosphoglycerate contacts are provided by lysine 336, arginine 365, serine 366, and lysine 387. The active-site Proton acceptor is the lysine 336.

It belongs to the enolase family. As to quaternary structure, component of the RNA degradosome, a multiprotein complex involved in RNA processing and mRNA degradation. The cofactor is Mg(2+).

It is found in the cytoplasm. The protein localises to the secreted. The protein resides in the cell surface. It catalyses the reaction (2R)-2-phosphoglycerate = phosphoenolpyruvate + H2O. It functions in the pathway carbohydrate degradation; glycolysis; pyruvate from D-glyceraldehyde 3-phosphate: step 4/5. Its function is as follows. Catalyzes the reversible conversion of 2-phosphoglycerate (2-PG) into phosphoenolpyruvate (PEP). It is essential for the degradation of carbohydrates via glycolysis. In Legionella pneumophila (strain Corby), this protein is Enolase.